A 285-amino-acid chain; its full sequence is MNSFRFTKMHGLGNSYIYVNQFEEHLPEELLSDLAVKVSSVYTGIGSDGMILICPSDRAPVKMRIFNSDGSEGKNCGNGLRCVAKYAYEHKLVEETSFLIETLSGLVKAQVEVDEGKVVSATVDMGEPRLLKSDMPMRGEQGSETINEKMIFGGREMKGTAVSMGNPHIVFYLDDIEKAPLTTMGPLIEKDERFPEGVNVEFVEVENENELHFRVWERGSGITQACGTGACAAAVSSVLNGYSKRDTDITVHLAGGDLIINWKNDGRVMMTGPAETVCEGEFFIS.

Residues asparagine 14 and asparagine 67 each coordinate substrate. Residue cysteine 76 is the Proton donor of the active site. Residues 77–78, asparagine 166, asparagine 199, and 217–218 each bind substrate; these read GN and ER. Cysteine 226 acts as the Proton acceptor in catalysis. Residue 227–228 coordinates substrate; that stretch reads GT.

This sequence belongs to the diaminopimelate epimerase family. In terms of assembly, homodimer.

It localises to the cytoplasm. The catalysed reaction is (2S,6S)-2,6-diaminopimelate = meso-2,6-diaminopimelate. Its pathway is amino-acid biosynthesis; L-lysine biosynthesis via DAP pathway; DL-2,6-diaminopimelate from LL-2,6-diaminopimelate: step 1/1. Its function is as follows. Catalyzes the stereoinversion of LL-2,6-diaminopimelate (L,L-DAP) to meso-diaminopimelate (meso-DAP), a precursor of L-lysine and an essential component of the bacterial peptidoglycan. The polypeptide is Diaminopimelate epimerase (Bacillus licheniformis (strain ATCC 14580 / DSM 13 / JCM 2505 / CCUG 7422 / NBRC 12200 / NCIMB 9375 / NCTC 10341 / NRRL NRS-1264 / Gibson 46)).